A 218-amino-acid polypeptide reads, in one-letter code: ER lumen protein-retaining receptor (218 aa).

Residues 1–2 (MN) lie on the Lumenal side of the membrane. A helical transmembrane segment spans residues 3–23 (LFSFLGDMLHLGSMLILLFKI). Topologically, residues 24–57 (KNDKSCAGVSLKSQILFTIVFTARYLDLFTNYVS) are cytoplasmic. The chain crosses the membrane as a helical span at residues 58–78 (LYITFMKITYIAVSYYTLHLI). Over 79–94 (ARKYKFTYDKDHDTFK) the chain is Lumenal. The helical transmembrane segment at 95–115 (IVYLIASCAILSLITYDKTTI) threads the bilayer. Residues 116 to 123 (GIYSTFLE) lie on the Cytoplasmic side of the membrane. The helical transmembrane segment at 124-144 (ILWTFSIYLESIAILPQLILL) threads the bilayer. Topologically, residues 145 to 152 (QRTGEVEA) are lumenal. The chain crosses the membrane as a helical span at residues 153-173 (LTSNYIVLLGGYRAFYLFNWI). Residues 174-184 (YRITFYNWSGK) lie on the Cytoplasmic side of the membrane. A helical membrane pass occupies residues 185-205 (IEMLSGLLQTILYADFFYYYA). The Lumenal segment spans residues 206 to 218 (KSRMYGKKLVLPQ).

Belongs to the ERD2 family.

The protein resides in the endoplasmic reticulum membrane. In terms of biological role, required for the retention of luminal endoplasmic reticulum proteins. Determines the specificity of the luminal ER protein retention system. Also required for normal vesicular traffic through the Golgi. The protein is ER lumen protein-retaining receptor (kdelr) of Dictyostelium discoideum (Social amoeba).